A 278-amino-acid chain; its full sequence is Polyamine aminopropyltransferase (278 aa).

The PABS domain occupies 5–238; sequence ELWFTEQQTP…GLWSFTMGSK (234 aa). S-methyl-5'-thioadenosine is bound at residue glutamine 34. Residues histidine 65 and aspartate 89 each contribute to the spermidine site. S-methyl-5'-thioadenosine-binding positions include glutamate 109 and 140 to 141; that span reads DG. Residue aspartate 158 is the Proton acceptor of the active site. A spermidine-binding site is contributed by 158-161; it reads DSTD. S-methyl-5'-thioadenosine is bound at residue proline 165.

This sequence belongs to the spermidine/spermine synthase family. As to quaternary structure, homodimer or homotetramer.

It is found in the cytoplasm. It catalyses the reaction S-adenosyl 3-(methylsulfanyl)propylamine + putrescine = S-methyl-5'-thioadenosine + spermidine + H(+). Its pathway is amine and polyamine biosynthesis; spermidine biosynthesis; spermidine from putrescine: step 1/1. In terms of biological role, catalyzes the irreversible transfer of a propylamine group from the amino donor S-adenosylmethioninamine (decarboxy-AdoMet) to putrescine (1,4-diaminobutane) to yield spermidine. The chain is Polyamine aminopropyltransferase from Caldicellulosiruptor saccharolyticus (strain ATCC 43494 / DSM 8903 / Tp8T 6331).